A 265-amino-acid polypeptide reads, in one-letter code: Homeobox protein engrailed-2-B (265 aa).

Composition is skewed to basic and acidic residues over residues 1 to 12 and 102 to 115; these read MEENEQNNREVE and GEKK…ETLK. 3 disordered regions span residues 1–38, 60–138, and 156–182; these read MEEN…QPHH, INHQ…SSKA, and DRPS…PRTA. Residues 122-136 show a composition bias toward low complexity; it reads DHSLSSDSDSSQASS. The segment at residues 176–235 is a DNA-binding region (homeobox); sequence DKRPRTAFTAEQLQRLKAEFQTNRYLTEQRRQSLAQELGLNESQIKIWFQNKRAKIKKST.

It belongs to the engrailed homeobox family.

It localises to the nucleus. This is Homeobox protein engrailed-2-B (en2-b) from Xenopus laevis (African clawed frog).